A 179-amino-acid chain; its full sequence is Segregation and condensation protein B (179 aa).

The protein belongs to the ScpB family. In terms of assembly, homodimer. Homodimerization may be required to stabilize the binding of ScpA to the Smc head domains. Component of a cohesin-like complex composed of ScpA, ScpB and the Smc homodimer, in which ScpA and ScpB bind to the head domain of Smc. The presence of the three proteins is required for the association of the complex with DNA.

The protein resides in the cytoplasm. Its function is as follows. Participates in chromosomal partition during cell division. May act via the formation of a condensin-like complex containing Smc and ScpA that pull DNA away from mid-cell into both cell halves. The polypeptide is Segregation and condensation protein B (Streptococcus equi subsp. equi (strain 4047)).